Reading from the N-terminus, the 225-residue chain is Heptaprenylglyceryl phosphate synthase (225 aa).

K6 serves as a coordination point for sn-glycerol 1-phosphate. Positions 8 and 34 each coordinate Mg(2+). Residues 153-158 (YVEYSG), G183, and 203-204 (GN) contribute to the sn-glycerol 1-phosphate site.

It belongs to the GGGP/HepGP synthase family. Group I subfamily. As to quaternary structure, homodimer. The cofactor is Mg(2+).

The enzyme catalyses sn-glycerol 1-phosphate + all-trans-heptaprenyl diphosphate = 3-heptaprenyl-sn-glycero-1-phosphate + diphosphate. Its pathway is membrane lipid metabolism; glycerophospholipid metabolism. Functionally, prenyltransferase that catalyzes in vivo the transfer of the heptaprenyl moiety of heptaprenyl pyrophosphate (HepPP; 35 carbon atoms) to the C3 hydroxyl of sn-glycerol-1-phosphate (G1P), producing heptaprenylglyceryl phosphate (HepGP). This reaction is an ether-bond-formation step in the biosynthesis of archaea-type G1P-based membrane lipids found in Bacillales. This is Heptaprenylglyceryl phosphate synthase from Listeria monocytogenes serotype 4b (strain F2365).